The sequence spans 286 residues: Polyamine aminopropyltransferase (286 aa).

Residues 5 to 238 (TMWHETLHDQ…GIMTFAWATN (234 aa)) form the PABS domain. Q33 is an S-methyl-5'-thioadenosine binding site. 2 residues coordinate spermidine: H64 and D88. Residues E108 and 140 to 141 (DG) contribute to the S-methyl-5'-thioadenosine site. D158 serves as the catalytic Proton acceptor. A spermidine-binding site is contributed by 158–161 (DCTD). Residue P165 participates in S-methyl-5'-thioadenosine binding.

This sequence belongs to the spermidine/spermine synthase family. As to quaternary structure, homodimer or homotetramer.

It is found in the cytoplasm. It carries out the reaction S-adenosyl 3-(methylsulfanyl)propylamine + putrescine = S-methyl-5'-thioadenosine + spermidine + H(+). The protein operates within amine and polyamine biosynthesis; spermidine biosynthesis; spermidine from putrescine: step 1/1. Catalyzes the irreversible transfer of a propylamine group from the amino donor S-adenosylmethioninamine (decarboxy-AdoMet) to putrescine (1,4-diaminobutane) to yield spermidine. The chain is Polyamine aminopropyltransferase from Salmonella paratyphi B (strain ATCC BAA-1250 / SPB7).